The chain runs to 145 residues: Allergen Sin a 1 (145 aa).

The tract at residues 34–62 is disordered; that stretch reads SGSGPSWTLDDEFDFEDDMENPQGPQQRP. Residues 40–54 constitute a propeptide that is removed on maturation; the sequence is WTLDDEFDFEDDMEN. The segment covering 42–53 has biased composition (acidic residues); it reads LDDEFDFEDDME.

Belongs to the 2S seed storage albumins family. As to quaternary structure, the protein consists of two chains linked by disulfide bonds.

In terms of biological role, this is a 2S seed storage protein. This is Allergen Sin a 1 from Sinapis alba (White mustard).